Reading from the N-terminus, the 88-residue chain is MAKSSSTKRRPAPEKPVKTRKCVFCSKKGKNQVIDYKDTQLLRTYISERGKIRARRVTGNCVQHQRDIAIAVKNAREVALLPFSSSTR.

The protein belongs to the bacterial ribosomal protein bS18 family. As to quaternary structure, part of the 30S ribosomal subunit. Forms a tight heterodimer with protein bS6.

Functionally, binds as a heterodimer with protein bS6 to the central domain of the 16S rRNA, where it helps stabilize the platform of the 30S subunit. The polypeptide is Small ribosomal subunit protein bS18A (Mycolicibacterium gilvum (strain PYR-GCK) (Mycobacterium gilvum (strain PYR-GCK))).